The chain runs to 24 residues: N-acyl-L-amino acid amidohydrolase (24 aa).

It belongs to the peptidase M20 family. In terms of assembly, homotetramer. Co(2+) serves as cofactor.

The catalysed reaction is an N-acyl-L-amino acid + H2O = an L-alpha-amino acid + a carboxylate. The enzyme catalyses an N-acetyl-L-cysteine-S-conjugate + H2O = an S-substituted L-cysteine + acetate. The protein is N-acyl-L-amino acid amidohydrolase of Parageobacillus thermoglucosidasius (Geobacillus thermoglucosidasius).